Here is a 159-residue protein sequence, read N- to C-terminus: Ribosomal RNA large subunit methyltransferase H (159 aa).

S-adenosyl-L-methionine contacts are provided by residues Leu76, Gly108, and 127 to 132; that span reads FSRMTF.

It belongs to the RNA methyltransferase RlmH family. As to quaternary structure, homodimer.

It localises to the cytoplasm. It catalyses the reaction pseudouridine(1915) in 23S rRNA + S-adenosyl-L-methionine = N(3)-methylpseudouridine(1915) in 23S rRNA + S-adenosyl-L-homocysteine + H(+). In terms of biological role, specifically methylates the pseudouridine at position 1915 (m3Psi1915) in 23S rRNA. The protein is Ribosomal RNA large subunit methyltransferase H of Clostridioides difficile (strain 630) (Peptoclostridium difficile).